The sequence spans 424 residues: Histidine--tRNA ligase (424 aa).

Belongs to the class-II aminoacyl-tRNA synthetase family. As to quaternary structure, homodimer.

The protein localises to the cytoplasm. It catalyses the reaction tRNA(His) + L-histidine + ATP = L-histidyl-tRNA(His) + AMP + diphosphate + H(+). This Shewanella denitrificans (strain OS217 / ATCC BAA-1090 / DSM 15013) protein is Histidine--tRNA ligase.